Here is a 484-residue protein sequence, read N- to C-terminus: Glutamate--tRNA ligase (484 aa).

A 'HIGH' region motif is present at residues 12–22; sequence PSPTGEPHVGT. The 'KMSKS' region motif lies at 253–257; it reads KLSKR. Lys256 is a binding site for ATP.

Belongs to the class-I aminoacyl-tRNA synthetase family. Glutamate--tRNA ligase type 1 subfamily. In terms of assembly, monomer.

The protein resides in the cytoplasm. It catalyses the reaction tRNA(Glu) + L-glutamate + ATP = L-glutamyl-tRNA(Glu) + AMP + diphosphate. In terms of biological role, catalyzes the attachment of glutamate to tRNA(Glu) in a two-step reaction: glutamate is first activated by ATP to form Glu-AMP and then transferred to the acceptor end of tRNA(Glu). This Rhizobium leguminosarum bv. trifolii (strain WSM2304) protein is Glutamate--tRNA ligase.